The primary structure comprises 1352 residues: DNA-directed RNA polymerase subunit beta (1352 aa).

Belongs to the RNA polymerase beta chain family. The RNAP catalytic core consists of 2 alpha, 1 beta, 1 beta' and 1 omega subunit. When a sigma factor is associated with the core the holoenzyme is formed, which can initiate transcription.

It carries out the reaction RNA(n) + a ribonucleoside 5'-triphosphate = RNA(n+1) + diphosphate. In terms of biological role, DNA-dependent RNA polymerase catalyzes the transcription of DNA into RNA using the four ribonucleoside triphosphates as substrates. The polypeptide is DNA-directed RNA polymerase subunit beta (Hydrogenovibrio crunogenus (strain DSM 25203 / XCL-2) (Thiomicrospira crunogena)).